The following is a 189-amino-acid chain: UPF0301 protein PLES_04031 (189 aa).

The protein belongs to the UPF0301 (AlgH) family.

This is UPF0301 protein PLES_04031 from Pseudomonas aeruginosa (strain LESB58).